We begin with the raw amino-acid sequence, 888 residues long: C2H2 zinc finger transcription factor sltA (888 aa).

Disordered stretches follow at residues 1–78 (MSTS…QRSP), 132–176 (IDSQ…SSEN), and 388–407 (RSSM…ASAP). 3 stretches are compositionally biased toward polar residues: residues 23 to 32 (PSLSASTSIE), 167 to 176 (GLGTSLSSEN), and 388 to 397 (RSSMPSNREP). 2 C2H2-type zinc fingers span residues 500 to 522 (QKCK…EKTH) and 561 to 586 (YKCK…EKAH). A disordered region spans residues 589–663 (DYVRSKHNGR…PTQTGSGDFP (75 aa)). Residues 602 to 632 (KASNGATPQTPSIATPSSKAQGITTPLTGSE) are compositionally biased toward polar residues.

The protein localises to the nucleus. Its function is as follows. Transcription factor that contributes to azole resistance by coregulating the expression of the drug target erg11A and the drug efflux pump mdr1. Binds to the 5'-AGGCA-3' motif in the promoters of ergosterol biosynthesis and drug pump genes to regulate their expression. Is able to interact with the promoters of sltA, sltB, erg11A, erg13A, erg24A, mdr1, abcE and mfsC. Involved in antifungal drug resistance to azoles, terbinafine, and simvastatin but not amphotericin B or caspofungin. The sequence is that of C2H2 zinc finger transcription factor sltA from Aspergillus fumigatus (strain CBS 144.89 / FGSC A1163 / CEA10) (Neosartorya fumigata).